The chain runs to 515 residues: Glucose-6-phosphate 1-dehydrogenase X (515 aa).

A2 carries the post-translational modification N-acetylalanine. NADP(+)-binding positions include 38 to 45 (GASGDLAK), R72, Y147, and K171. Residues K171, 201–205 (HYLGK), E239, and D258 each bind D-glucose 6-phosphate. Catalysis depends on H263, which acts as the Proton acceptor. R357 contacts NADP(+). The D-glucose 6-phosphate site is built by K360 and R365. Residues K366, R370, and R393 each coordinate NADP(+). Q395 contributes to the D-glucose 6-phosphate binding site. Residues 401-403 (YTK), 421-423 (DLT), R487, and Y503 contribute to the NADP(+) site. Y507 carries the post-translational modification Phosphotyrosine. An NADP(+)-binding site is contributed by W509.

The protein belongs to the glucose-6-phosphate dehydrogenase family. Homotetramer; dimer of dimers. Interacts with SIRT2; the interaction is enhanced by H(2)O(2) treatment. Forms a ternary complex with ALDOB and TP53; this interaction is direct. ALDOB stabilizes the complex inhibiting G6PD activity and keeping oxidative pentose phosphate metabolism in check. Post-translationally, acetylated by ELP3 at Lys-403; acetylation inhibits its homodimerization and enzyme activity. Deacetylated by SIRT2 at Lys-403; deacetylation stimulates its enzyme activity.

The protein localises to the cytoplasm. Its subcellular location is the cytosol. The protein resides in the membrane. The enzyme catalyses D-glucose 6-phosphate + NADP(+) = 6-phospho-D-glucono-1,5-lactone + NADPH + H(+). It participates in carbohydrate degradation; pentose phosphate pathway; D-ribulose 5-phosphate from D-glucose 6-phosphate (oxidative stage): step 1/3. Functionally, catalyzes the rate-limiting step of the oxidative pentose-phosphate pathway, which represents a route for the dissimilation of carbohydrates besides glycolysis. The main function of this enzyme is to provide reducing power (NADPH) and pentose phosphates for fatty acid and nucleic acid synthesis. This Mus musculus (Mouse) protein is Glucose-6-phosphate 1-dehydrogenase X (G6pdx).